Here is a 441-residue protein sequence, read N- to C-terminus: ATP-dependent protease ATPase subunit HslU (441 aa).

Residues isoleucine 18, 60-65 (GVGKTE), aspartate 254, glutamate 319, and arginine 391 each bind ATP.

It belongs to the ClpX chaperone family. HslU subfamily. In terms of assembly, a double ring-shaped homohexamer of HslV is capped on each side by a ring-shaped HslU homohexamer. The assembly of the HslU/HslV complex is dependent on binding of ATP.

Its subcellular location is the cytoplasm. Functionally, ATPase subunit of a proteasome-like degradation complex; this subunit has chaperone activity. The binding of ATP and its subsequent hydrolysis by HslU are essential for unfolding of protein substrates subsequently hydrolyzed by HslV. HslU recognizes the N-terminal part of its protein substrates and unfolds these before they are guided to HslV for hydrolysis. This chain is ATP-dependent protease ATPase subunit HslU, found in Shewanella halifaxensis (strain HAW-EB4).